Reading from the N-terminus, the 208-residue chain is Casparian strip membrane protein 2 (208 aa).

The tract at residues 1–23 is disordered; it reads MDSKSGRSESAINIPESNSTKHK. Over 1–46 the chain is Cytoplasmic; the sequence is MDSKSGRSESAINIPESNSTKHKSTVVHTATKVAAVAPRGGGWRRG. Over residues 8 to 18 the composition is skewed to polar residues; the sequence is SESAINIPESN. A helical membrane pass occupies residues 47 to 67; it reads VSIFDFILRICALAAALAATA. Over 68–96 the chain is Extracellular; that stretch reads TMGTTDQTLPFFTQFFQFQASYDDLPAFT. A helical transmembrane segment spans residues 97–117; sequence FFVVANGIASGYLVLSLPFSI. Residues 118–129 are Cytoplasmic-facing; it reads ATIVRPHAAAIK. Residues 130–150 form a helical membrane-spanning segment; sequence LLLIIFDTVMVAFTAAAAAAA. The Extracellular portion of the chain corresponds to 151–184; sequence AAIVYLAHNGNSKTNWFAICQQFNDFCQRVSGAV. The chain crosses the membrane as a helical span at residues 185–205; sequence VASFVAAVILIFLVVLSAVAI. Over 206-208 the chain is Cytoplasmic; sequence RKH.

Belongs to the Casparian strip membrane proteins (CASP) family. In terms of assembly, homodimer and heterodimers.

The protein localises to the cell membrane. Functionally, regulates membrane-cell wall junctions and localized cell wall deposition. Required for establishment of the Casparian strip membrane domain (CSD) and the subsequent formation of Casparian strips, a cell wall modification of the root endodermis that determines an apoplastic barrier between the intraorganismal apoplasm and the extraorganismal apoplasm and prevents lateral diffusion. The chain is Casparian strip membrane protein 2 from Triphysaria pusilla (Dwarf owl's-clover).